A 104-amino-acid polypeptide reads, in one-letter code: AVIToxin-VAR1 (104 aa).

A signal peptide spans 1 to 19; it reads MRSLLCAPLLLLLLSAGES. Cystine bridges form between Cys-26–Cys-38, Cys-32–Cys-50, Cys-37–Cys-78, Cys-60–Cys-86, and Cys-80–Cys-96.

Belongs to the AVIT (prokineticin) family. As to expression, expressed by the venom gland.

The protein resides in the secreted. Potent agonist for both PKR1/PROKR1 and PKR2/PROKR2. Potently contracts gastrointestinal (GI) smooth muscle. This Varanus varius (Lace monitor lizard) protein is AVIToxin-VAR1.